Here is a 255-residue protein sequence, read N- to C-terminus: H-2 class II histocompatibility antigen, E-U alpha chain (255 aa).

Residues 1–25 (MATIGALLLRFFFIAVLMSSQKSWA) form the signal peptide. The interval 26-109 (IKEEHTIIQA…KRSNNTPDAN (84 aa)) is alpha-1. The Extracellular portion of the chain corresponds to 26–217 (IKEEHTIIQA…KTLLPETKEN (192 aa)). The tract at residues 110–203 (VAPEVTVLSR…GLEEPLRKHW (94 aa)) is alpha-2. The Ig-like C1-type domain maps to 112-204 (PEVTVLSRSP…LEEPLRKHWE (93 aa)). The cysteines at positions 132 and 188 are disulfide-linked. N-linked (GlcNAc...) asparagine glycosylation occurs at asparagine 143. Residues 204-216 (EFEEKTLLPETKE) form a connecting peptide region. A helical membrane pass occupies residues 218-238 (VVCALGLFVGLVGIVVGIILI). Topologically, residues 239 to 255 (MKGIKKRNVVERRQGAL) are cytoplasmic.

It belongs to the MHC class II family.

The protein resides in the membrane. This Mus musculus (Mouse) protein is H-2 class II histocompatibility antigen, E-U alpha chain (H2-Ea).